The sequence spans 660 residues: Epithelial sodium channel subunit gamma (660 aa).

The Cytoplasmic portion of the chain corresponds to 1-55; that stretch reads MSKSGKKLTQKLKKNLPVTGPQAPTLYELMQWYCLNTNTHGCRRIVVSKGRLRRW. A helical transmembrane segment spans residues 56–76; the sequence is IWISLTLCAVAVIFWQCALLL. Topologically, residues 77–537 are extracellular; the sequence is MSYYSVSASI…VTLLSNFGGQ (461 aa). Disulfide bonds link Cys-101–Cys-286, Cys-209–Cys-217, Cys-263–Cys-270, Cys-375–Cys-460, Cys-397–Cys-456, Cys-401–Cys-452, Cys-410–Cys-437, and Cys-412–Cys-426. Residues 538-558 traverse the membrane as a helical segment; sequence LGLWMSCSMICVLEIIEVFFI. Topologically, residues 559–660 are cytoplasmic; the sequence is DSFWVVLRQR…IDSDEDVERL (102 aa).

The protein belongs to the amiloride-sensitive sodium channel (TC 1.A.6) family. SCNN1G subfamily. Component of the heterotrimeric epithelial sodium channel (ENaC) composed of an alpha/SCNN1A, a beta/SCNN1B and a gamma/SCNN1G subunit.

It localises to the apical cell membrane. It catalyses the reaction Na(+)(in) = Na(+)(out). Its activity is regulated as follows. Originally identified and characterized by its inhibition by the diuretic drug amiloride. This is one of the three pore-forming subunits of the heterotrimeric epithelial sodium channel (ENaC), a critical regulator of sodium balance and fluid homeostasis. ENaC operates in epithelial tissues, where it mediates the electrodiffusion of sodium ions from extracellular fluid through the apical membrane of cells, with water following osmotically. This chain is Epithelial sodium channel subunit gamma (scnn1g-a), found in Xenopus laevis (African clawed frog).